The chain runs to 396 residues: Tryptophan synthase beta chain (396 aa).

At K86 the chain carries N6-(pyridoxal phosphate)lysine.

This sequence belongs to the TrpB family. As to quaternary structure, tetramer of two alpha and two beta chains. Requires pyridoxal 5'-phosphate as cofactor.

The enzyme catalyses (1S,2R)-1-C-(indol-3-yl)glycerol 3-phosphate + L-serine = D-glyceraldehyde 3-phosphate + L-tryptophan + H2O. Its pathway is amino-acid biosynthesis; L-tryptophan biosynthesis; L-tryptophan from chorismate: step 5/5. In terms of biological role, the beta subunit is responsible for the synthesis of L-tryptophan from indole and L-serine. The polypeptide is Tryptophan synthase beta chain (Photobacterium profundum (strain SS9)).